A 490-amino-acid polypeptide reads, in one-letter code: UDP-N-acetylmuramoyl-L-alanyl-D-glutamate--2,6-diaminopimelate ligase (490 aa).

UDP-N-acetyl-alpha-D-muramoyl-L-alanyl-D-glutamate is bound by residues Leu-22, Ser-24, and 39 to 41; that span reads HQT. An ATP-binding site is contributed by 111-117; it reads GTNGKTT. Residues Asn-152, 153–154, Ser-180, Gln-186, and Arg-188 contribute to the UDP-N-acetyl-alpha-D-muramoyl-L-alanyl-D-glutamate site; that span reads TT. Lys-220 carries the post-translational modification N6-carboxylysine. Residues Arg-385, 409-412, Gly-460, and Glu-464 each bind meso-2,6-diaminopimelate; that span reads DNPR. Positions 409-412 match the Meso-diaminopimelate recognition motif motif; it reads DNPR.

The protein belongs to the MurCDEF family. MurE subfamily. Mg(2+) serves as cofactor. Carboxylation is probably crucial for Mg(2+) binding and, consequently, for the gamma-phosphate positioning of ATP.

The protein localises to the cytoplasm. It catalyses the reaction UDP-N-acetyl-alpha-D-muramoyl-L-alanyl-D-glutamate + meso-2,6-diaminopimelate + ATP = UDP-N-acetyl-alpha-D-muramoyl-L-alanyl-gamma-D-glutamyl-meso-2,6-diaminopimelate + ADP + phosphate + H(+). Its pathway is cell wall biogenesis; peptidoglycan biosynthesis. In terms of biological role, catalyzes the addition of meso-diaminopimelic acid to the nucleotide precursor UDP-N-acetylmuramoyl-L-alanyl-D-glutamate (UMAG) in the biosynthesis of bacterial cell-wall peptidoglycan. The polypeptide is UDP-N-acetylmuramoyl-L-alanyl-D-glutamate--2,6-diaminopimelate ligase (Yersinia pestis).